Reading from the N-terminus, the 84-residue chain is Turripeptide IX-01 (84 aa).

An N-terminal signal peptide occupies residues 1 to 21 (MGFYMLLTVALLLTSFMSVEA). The propeptide occupies 22-39 (TPVDQAERSAMKESGLAH). Intrachain disulfides connect C48–C70, C55–C74, and C60–C81.

As to expression, expressed by the venom duct.

The protein resides in the secreted. This chain is Turripeptide IX-01, found in Gemmula speciosa (Splendid gem-turris).